The sequence spans 178 residues: Translation initiation factor IF-3 (178 aa).

The interval 1-20 is disordered; sequence MRRPFRATPVQKDGPRSNRD.

The protein belongs to the IF-3 family. In terms of assembly, monomer.

It is found in the cytoplasm. In terms of biological role, IF-3 binds to the 30S ribosomal subunit and shifts the equilibrium between 70S ribosomes and their 50S and 30S subunits in favor of the free subunits, thus enhancing the availability of 30S subunits on which protein synthesis initiation begins. The protein is Translation initiation factor IF-3 of Brucella abortus biovar 1 (strain 9-941).